The following is a 358-amino-acid chain: Ganglioside-induced differentiation-associated protein 1 (358 aa).

One can recognise a GST N-terminal domain in the interval 24 to 105 (VKLILYHWTH…YLEQTFLDER (82 aa)). Residues lysine 50, lysine 172, lysine 173, lysine 188, and lysine 190 each participate in a glycyl lysine isopeptide (Lys-Gly) (interchain with G-Cter in ubiquitin) cross-link. Positions 153 to 309 (PAYATTRIRS…LISAVLPTAF (157 aa)) constitute a GST C-terminal domain. Lysine 203 bears the N6-acetyllysine; alternate mark. A Glycyl lysine isopeptide (Lys-Gly) (interchain with G-Cter in ubiquitin); alternate cross-link involves residue lysine 203. Glycyl lysine isopeptide (Lys-Gly) (interchain with G-Cter in ubiquitin) cross-links involve residues lysine 206, lysine 207, and lysine 214. Transmembrane regions (helical) follow at residues 292-312 (VLGH…FRVA) and 320-340 (LGTT…FMLF). A required for mitochondrial localization region spans residues 320 to 358 (LGTTLVVGLLAGVGYFAFMLFRKRLGSMILAFRPRPNYF).

Belongs to the GST superfamily. In terms of assembly, homodimer. Post-translationally, ubiquitinated by PRKN during mitophagy, leading to its degradation and enhancement of mitophagy. Deubiquitinated by USP30. In terms of tissue distribution, highly expressed in whole brain and spinal cord. Predominant expression in central tissues of the nervous system not only in neurons but also in Schwann cells.

The protein localises to the mitochondrion outer membrane. Its subcellular location is the cytoplasm. In terms of biological role, regulates the mitochondrial network by promoting mitochondrial fission. The polypeptide is Ganglioside-induced differentiation-associated protein 1 (GDAP1) (Homo sapiens (Human)).